A 2004-amino-acid polypeptide reads, in one-letter code: Alpha-2-macroglobulin homolog (2004 aa).

The signal sequence occupies residues 1-27; that stretch reads MLCCLVFKGLLSMDLLRFLLISPFALI.

It belongs to the protease inhibitor I39 (alpha-2-macroglobulin) family. Bacterial alpha-2-macroglobulin subfamily.

This Yersinia pestis protein is Alpha-2-macroglobulin homolog.